The chain runs to 103 residues: MAHYKAADSKREQFRRYLEKSGVLDTLTKVLVALYEEPEKPNSALDFLKHHLGAATPENPEIELLRLELAEIKEKYEAIVEENKKLKAKLAQYEPPQEEKRAE.

It belongs to the AMY1 family. In terms of assembly, binds via its C-terminal region to the N-terminal region of MYC. Associates with AKAP1/S-AKAP84. Interacts with MYCBPAP. Interacts with CFAP91.

Its subcellular location is the cytoplasm. It is found in the nucleus. In terms of biological role, may control the transcriptional activity of MYC. Stimulates the activation of E box-dependent transcription by MYC. This Pongo abelii (Sumatran orangutan) protein is c-Myc-binding protein (MYCBP).